Here is a 1409-residue protein sequence, read N- to C-terminus: L-2-aminoadipate reductase large subunit (1409 aa).

Residues 858–937 (QALSETEQTL…GFASEIDRLL (80 aa)) form the Carrier domain. Residue S896 is modified to O-(pantetheine 4'-phosphoryl)serine.

The protein belongs to the ATP-dependent AMP-binding enzyme family. As to quaternary structure, heterodimer of an alpha and a beta subunit. Pantetheine 4'-phosphate is required as a cofactor.

It catalyses the reaction (S)-2-amino-6-oxohexanoate + NADP(+) + H2O = L-2-aminoadipate + NADPH + 2 H(+). It carries out the reaction (S)-2-amino-6-oxohexanoate + NAD(+) + H2O = L-2-aminoadipate + NADH + 2 H(+). The catalysed reaction is (S)-2-amino-6-oxohexanoate + AMP + diphosphate + NADP(+) = L-2-aminoadipate + ATP + NADPH + H(+). It participates in amino-acid biosynthesis; L-lysine biosynthesis via AAA pathway; L-lysine from L-alpha-aminoadipate (fungal route): step 1/3. Functionally, catalyzes the activation of alpha-aminoadipate by ATP-dependent adenylation and the reduction of activated alpha-aminoadipate by NADPH. The activated alpha-aminoadipate is bound to the phosphopantheinyl group of the enzyme itself before it is reduced to (S)-2-amino-6-oxohexanoate. The polypeptide is L-2-aminoadipate reductase large subunit (lys2) (Penicillium chrysogenum (Penicillium notatum)).